Here is a 1159-residue protein sequence, read N- to C-terminus: DNA-directed RNA polymerase subunit beta' (1159 aa).

Positions 398, 400, and 402 each coordinate Mg(2+). Zn(2+) is bound by residues Cys-741, Cys-815, Cys-822, and Cys-825.

It belongs to the RNA polymerase beta' chain family. The RNAP catalytic core consists of 2 alpha, 1 beta, 1 beta' and 1 omega subunit. When a sigma factor is associated with the core the holoenzyme is formed, which can initiate transcription. Mg(2+) is required as a cofactor. The cofactor is Zn(2+).

It carries out the reaction RNA(n) + a ribonucleoside 5'-triphosphate = RNA(n+1) + diphosphate. Its function is as follows. DNA-dependent RNA polymerase catalyzes the transcription of DNA into RNA using the four ribonucleoside triphosphates as substrates. This is DNA-directed RNA polymerase subunit beta' from Porphyromonas cangingivalis.